A 153-amino-acid polypeptide reads, in one-letter code: Fucose mutarotase (153 aa).

Residue His24 is the Proton donor of the active site. Residue Asp32 participates in substrate binding. Asp69 is an active-site residue. Substrate is bound by residues Met79, Tyr119, Tyr137, and Asn139. Tyr119 is a catalytic residue.

The protein belongs to the RbsD / FucU family. As to quaternary structure, mainly homodimer, but also exists as homotetramer, homooctamer, and homodecamer. The homodimeric form seems catalytically inactive.

The catalysed reaction is alpha-L-fucose = beta-L-fucose. The protein operates within carbohydrate metabolism; L-fucose metabolism. Involved in the interconversion between alpha- and beta-L-fucoses. L-Fucose (6-deoxy-L-galactose) exists as alpha-L-fucose (29.5%) and beta-L-fucose (70.5%), the beta-form is metabolized through the salvage pathway. GDP-L-fucose formed either by the de novo or salvage pathways is transported into the endoplasmic reticulum, where it serves as a substrate for N- and O-glycosylations by fucosyltransferases. Fucosylated structures expressed on cell surfaces or secreted in biological fluids are believed to play a critical role in cell-cell adhesion and recognition processes. The protein is Fucose mutarotase (FUOM) of Bos taurus (Bovine).